The primary structure comprises 7603 residues: Cysteine repeat modular protein B (7603 aa).

Asparagine 172 carries an N-linked (GlcNAc...) asparagine glycan. Residues 223-243 (LVGFFLVPVFVVFFVLSSDAT) traverse the membrane as a helical segment. Disordered regions lie at residues 248-275 (GVGVLSARADREEKSSVSSSSRASSSPG) and 291-323 (RDTKAAGYTGRSSRRSARARRRRAADGGEGKGF). Low complexity predominate over residues 263-275 (SVSSSSRASSSPG). Positions 302–313 (SSRRSARARRRR) are enriched in basic residues. N-linked (GlcNAc...) asparagine glycans are attached at residues asparagine 329, asparagine 589, asparagine 848, asparagine 1128, asparagine 1183, and asparagine 1402. A disordered region spans residues 1554-1574 (VLRSRSGPSHPSSVSQPSPSF). The span at 1557 to 1573 (SRSGPSHPSSVSQPSPS) shows a compositional bias: low complexity. N-linked (GlcNAc...) asparagine glycosylation is found at asparagine 1622, asparagine 2578, asparagine 2664, asparagine 3094, and asparagine 3126. A disordered region spans residues 3316-3445 (SNAVPEADEN…SDLTTSQPED (130 aa)). Over residues 3321–3340 (EADENQVESAEPEQNAEGET) the composition is skewed to acidic residues. Positions 3342 to 3360 (EQGAEEAGGNAAEPGAESG) are enriched in low complexity. N-linked (GlcNAc...) asparagine glycans are attached at residues asparagine 3546, asparagine 4367, asparagine 4823, asparagine 4901, asparagine 5186, asparagine 5546, and asparagine 5666. Residues 5758-5799 (LAESRSDDGTVGDDVDLDDNALSGTTNSGWTTSSSNSERVRK) are disordered. Over residues 5767 to 5776 (TVGDDVDLDD) the composition is skewed to acidic residues. A compositionally biased stretch (low complexity) spans 5780-5794 (SGTTNSGWTTSSSNS). N-linked (GlcNAc...) asparagine glycans are attached at residues asparagine 5806, asparagine 5876, asparagine 5998, asparagine 6055, and asparagine 6369. The disordered stretch occupies residues 6043 to 6115 (GEADHTPADG…EASEAESVSA (73 aa)). The span at 6051–6060 (DGSSNSSEDS) shows a compositional bias: polar residues. The span at 6391–6405 (EFTDTGPAPDDHTDE) shows a compositional bias: basic and acidic residues. The tract at residues 6391 to 6436 (EFTDTGPAPDDHTDEGGANLDSTGGSGEPSSSAPVDPSGENEGQLL) is disordered. Positions 6410–6423 (LDSTGGSGEPSSSA) are enriched in polar residues. Asparagine 6453 is a glycosylation site (N-linked (GlcNAc...) asparagine). Helical transmembrane passes span 6520-6540 (IFILMRLVVCGIIWIITALTI), 6552-6572 (VLIRIVMSHMFFLSVYGLMPA), 6578-6598 (LAGWASIYRLFFFEFYFALHP), 6627-6647 (IFVPFIDAVLLTIIGAICVAT), 6770-6790 (LILGGVGLLVWGVGSIAGFVA), 6831-6851 (CVALIITMYVHANASGAQEIF), 6888-6908 (GLMVNIIIGVIFQGSYYFEVF), and 6912-6932 (GAIPLAVAIFYYLYVLWSLFV). Asparagine 7013 carries N-linked (GlcNAc...) asparagine glycosylation. A helical transmembrane segment spans residues 7017 to 7037 (FVAALSDSLSQLVIAWCQFTI). N-linked (GlcNAc...) asparagine glycosylation is present at asparagine 7061. Positions 7174-7242 (APQLRKENHA…RGLIESEIDD (69 aa)) form a coiled coil. A disordered region spans residues 7379–7603 (AAPAAGLRSH…LKKPGSPKQE (225 aa)). Residues 7408-7417 (LGTNLSTPSA) are compositionally biased toward polar residues. N-linked (GlcNAc...) asparagine glycosylation occurs at asparagine 7411. Composition is skewed to low complexity over residues 7474–7496 (PTPSRSPSGTTRTVGSVVRSVTP), 7509–7541 (SEAPLISPSASSLASPRSLSPLTERRGSQSSDL), and 7560–7582 (GEAAPAEAPSPSPRSSSPLAAQP).

In terms of assembly, component of a complex, at least composed of cysteine repeat modular protein A (CRMPa), cysteine repeat modular protein B (CRMPb), micronemal protein 15 (MIC15) and thrombospondin type 1 domain-containing protein (TSP1).

The protein localises to the cell membrane. It localises to the endoplasmic reticulum. The protein resides in the golgi apparatus. Required for triggering rhoptry secretion. Plays a role in host cell invasion. The polypeptide is Cysteine repeat modular protein B (Toxoplasma gondii).